The sequence spans 690 residues: DNA ligase (690 aa).

Residues 43–47 (DAEYD), 92–93 (SI), and E129 each bind NAD(+). K131 functions as the N6-AMP-lysine intermediate in the catalytic mechanism. R152, E188, K309, and K333 together coordinate NAD(+). The Zn(2+) site is built by C427, C430, C445, and C451. Positions 610-690 (VTPTPLSGKT…GLKELLDGHS (81 aa)) constitute a BRCT domain.

Belongs to the NAD-dependent DNA ligase family. LigA subfamily. The cofactor is Mg(2+). It depends on Mn(2+) as a cofactor.

It carries out the reaction NAD(+) + (deoxyribonucleotide)n-3'-hydroxyl + 5'-phospho-(deoxyribonucleotide)m = (deoxyribonucleotide)n+m + AMP + beta-nicotinamide D-nucleotide.. DNA ligase that catalyzes the formation of phosphodiester linkages between 5'-phosphoryl and 3'-hydroxyl groups in double-stranded DNA using NAD as a coenzyme and as the energy source for the reaction. It is essential for DNA replication and repair of damaged DNA. The protein is DNA ligase of Albidiferax ferrireducens (strain ATCC BAA-621 / DSM 15236 / T118) (Rhodoferax ferrireducens).